The following is a 329-amino-acid chain: Vomeronasal type-1 receptor 43 (329 aa).

Residues 1–32 (MSKILFFSPCSLFSHTMNKNSRLHTNSNIGNT) lie on the Extracellular side of the membrane. Residues 33–53 (FFSEIGIGITGNSFLLLYHIL) form a helical membrane-spanning segment. Topologically, residues 54–65 (KFIRGHRPRLTD) are cytoplasmic. Residues 66 to 86 (LPIGLLSLIHLLMLLVAAFIA) form a helical membrane-spanning segment. The Extracellular segment spans residues 87 to 109 (TDIFISRRGWDDIICKFLVYLYR). An intrachain disulfide couples C101 to C188. The helical transmembrane segment at 110–130 (VLRGLSLCTTSMLSVLQAIIL) threads the bilayer. The Cytoplasmic segment spans residues 131–147 (SPRSSCLSKFKHISLHH). The chain crosses the membrane as a helical span at residues 148-168 (ILCAILFLSVLYMLISSQLLV). Residues 169–209 (SIIATPNLTTNDLTYVTQSCSILPLSYLVESINSTLLAIRE) are Extracellular-facing. Residues N175 and N201 are each glycosylated (N-linked (GlcNAc...) asparagine). A helical transmembrane segment spans residues 210 to 230 (YFLISLMFLSTWYIVALLCMH). Over 231–255 (RKQTQHLQETRLSLKKSPEQSATQT) the chain is Cytoplasmic. The helical transmembrane segment at 256-276 (ILMLMTFFVLMTIYDNIVSCL) threads the bilayer. Residues 277–285 (RTMLLNDPT) are Extracellular-facing. The chain crosses the membrane as a helical span at residues 286-306 (SYSIELFMIHIYATVSPFVFM). Residues 307-329 (SNEKHIVNFLRSMGKRMINLNLH) lie on the Cytoplasmic side of the membrane.

This sequence belongs to the G-protein coupled receptor 1 family.

Its subcellular location is the cell membrane. Functionally, putative pheromone receptor implicated in the regulation of social and reproductive behavior. This chain is Vomeronasal type-1 receptor 43 (Vmn1r43), found in Mus musculus (Mouse).